A 311-amino-acid polypeptide reads, in one-letter code: Inositol oxygenase 1 (311 aa).

Basic and acidic residues predominate over residues 1-11 (MTILIDRHSDQ). The interval 1 to 29 (MTILIDRHSDQNDAGDEIVEKNQGNGKEE) is disordered. Substrate contacts are provided by residues Arg-52 and 109-111 (DES). 3 residues coordinate Fe cation: His-122, His-147, and Asp-148. Substrate-binding positions include Lys-151 and 168–169 (GD). Residues His-220, His-246, and Asp-279 each contribute to the Fe cation site. Residue 246–247 (HS) participates in substrate binding.

This sequence belongs to the myo-inositol oxygenase family. It depends on Fe cation as a cofactor. In terms of tissue distribution, expressed in roots, young leaves, stems, flowers and siliques.

Its subcellular location is the cytoplasm. The enzyme catalyses myo-inositol + O2 = D-glucuronate + H2O + H(+). Its pathway is polyol metabolism; myo-inositol degradation into D-glucuronate; D-glucuronate from myo-inositol: step 1/1. Its function is as follows. Catalyzes the oxygenative cleavage of myo-inositol to D-glucuronate. Involved in the biosynthesis of UDP-glucuronic acid (UDP-GlcA), providing nucleotide sugars for cell-wall polymers. May be also involved in plant ascorbate biosynthesis. This is Inositol oxygenase 1 (MIOX1) from Arabidopsis thaliana (Mouse-ear cress).